The chain runs to 61 residues: uncharacterized protein (61 aa).

This is an uncharacterized protein from Methanocaldococcus jannaschii (strain ATCC 43067 / DSM 2661 / JAL-1 / JCM 10045 / NBRC 100440) (Methanococcus jannaschii).